Reading from the N-terminus, the 348-residue chain is MTRLTLALDAMGGDFGPCVTVPAALQALASNPALNLLLVGDPAAITPLLAKVDSDLLSRLEVVPAESVIASDARPSQAIRASRGTSMRIALELIKDGRAQACVSAGNTGALMGLAKLLIKPLEGIERPALVSVLPHQQHGKTVVLDLGANVDCDSTMLVQFAVMGSVMAEEVLELKNPRVALLNIGEEESKGLSTIREAAAQLKEAPSINYIGYLEGNDLLTGKTDVMVCDGFVGNVTLKTVEGVVRMFLSLLKSPASGPGQKQKRSWWLKWLGRLLQKRLSKRFGHLNPDQYNGACLLGLRGTVIKSHGAANQRAFAVAIEQAMQTVRRQLPDRIAARLEAVLPKSD.

This sequence belongs to the PlsX family. In terms of assembly, homodimer. Probably interacts with PlsY.

It localises to the cytoplasm. It catalyses the reaction a fatty acyl-[ACP] + phosphate = an acyl phosphate + holo-[ACP]. It functions in the pathway lipid metabolism; phospholipid metabolism. Catalyzes the reversible formation of acyl-phosphate (acyl-PO(4)) from acyl-[acyl-carrier-protein] (acyl-ACP). This enzyme utilizes acyl-ACP as fatty acyl donor, but not acyl-CoA. This is Phosphate acyltransferase from Pectobacterium carotovorum subsp. carotovorum (strain PC1).